We begin with the raw amino-acid sequence, 501 residues long: MKPRSSRDGHNAAAAAALLLAALVLSGDVLPAVVAGGAPSFNYKDALTKSIMFLEAQRSGKLPPTNRIKWRGDSGMEDGKLANVDLTGGYYDAGDNVKYGLPLAFTVTTLAWTAMAFEKELKAARELENVHAAIRWGTDYFLKAATKKDHLWVQVGDPNADHQCWVRPENMPTPRTLYQINDKTPGSEIAAETAAAMTASSMVFRKDKPYSRRLLNKAKLLFQFAKTHQGTYDGECPFYCSYSGYNDELLWAATWLYLATKRQVYADFIGHEAISSSVAEFSWDLKFPGAQVLLAELNMTSSGGLQSFKSQADNFVCAVLPDTPFHQVSITPGGMIHLRDGANSQYVTSTAFLFVAYSDILRRINQPVMCGAQAVQPARLLQFAKQQIDYLLGANPRGRSYVVGFGVNPPTQPHHRGASTPVLPPGYQVNCGMSFSEWFTPDRPNPNELTGAIMGGPDGGDNFSDKRGNSSCTEPCTYINSLSIGPLAALAIRGPNLIATQ.

The first 35 residues, Met-1–Ala-35, serve as a signal peptide directing secretion. The active-site Nucleophile is the Asp-95. Asn-298 is a glycosylation site (N-linked (GlcNAc...) asparagine). His-414 is a catalytic residue. A glycan (N-linked (GlcNAc...) asparagine) is linked at Asn-462. Asp-465 is a catalytic residue. N-linked (GlcNAc...) asparagine glycosylation occurs at Asn-469. Residue Glu-474 is part of the active site.

Belongs to the glycosyl hydrolase 9 (cellulase E) family.

The protein resides in the secreted. It carries out the reaction Endohydrolysis of (1-&gt;4)-beta-D-glucosidic linkages in cellulose, lichenin and cereal beta-D-glucans.. The chain is Endoglucanase 8 from Oryza sativa subsp. japonica (Rice).